The chain runs to 264 residues: MAAPGEALTPQGYIQHHLTNLHVGEGFWTWHIDSLFFSVGLGVLFLWIFRSVGKKATSGVPGKLQCFIEMIVEFVDNSVKESFHGRNALIAPLALTIFVWVFMMNFMDMLPVDWLPWLASLAGVPYLKVVPTTDVNITFSLAIGVFVLIIYYSIKVKGVSGFVKELTLQPFNHKAMIPVNLLLETVTLVAKPISLALRLFGNLYAGELIFILIALMYGTNLLLSSLGVTLQLGWLIFHILVITLQAFIFMMLTIVYLSMAHEDH.

6 helical membrane passes run 29–49, 87–107, 134–154, 177–197, 208–228, and 235–255; these read TWHI…LWIF, NALI…MNFM, DVNI…YYSI, IPVN…SLAL, LIFI…SLGV, and LIFH…LTIV.

It belongs to the ATPase A chain family. F-type ATPases have 2 components, CF(1) - the catalytic core - and CF(0) - the membrane proton channel. CF(1) has five subunits: alpha(3), beta(3), gamma(1), delta(1), epsilon(1). CF(0) has three main subunits: a(1), b(2) and c(9-12). The alpha and beta chains form an alternating ring which encloses part of the gamma chain. CF(1) is attached to CF(0) by a central stalk formed by the gamma and epsilon chains, while a peripheral stalk is formed by the delta and b chains.

It is found in the cell inner membrane. In terms of biological role, key component of the proton channel; it plays a direct role in the translocation of protons across the membrane. The protein is ATP synthase subunit a of Shewanella sp. (strain ANA-3).